The chain runs to 175 residues: Adenine phosphoribosyltransferase (175 aa).

The protein belongs to the purine/pyrimidine phosphoribosyltransferase family. As to quaternary structure, homodimer.

It localises to the cytoplasm. The catalysed reaction is AMP + diphosphate = 5-phospho-alpha-D-ribose 1-diphosphate + adenine. It participates in purine metabolism; AMP biosynthesis via salvage pathway; AMP from adenine: step 1/1. Functionally, catalyzes a salvage reaction resulting in the formation of AMP, that is energically less costly than de novo synthesis. The protein is Adenine phosphoribosyltransferase of Caldicellulosiruptor saccharolyticus (strain ATCC 43494 / DSM 8903 / Tp8T 6331).